The following is a 461-amino-acid chain: Bifunctional protein HldE (461 aa).

The tract at residues 1–312 is ribokinase; that stretch reads MLEFLSQQKP…IKSFNRVDFE (312 aa). 191–194 is an ATP binding site; it reads NKKE. Aspartate 259 is an active-site residue. A cytidylyltransferase region spans residues 334 to 461; that stretch reads FTNGCFDIVH…KIIEKIKDKK (128 aa).

In the N-terminal section; belongs to the carbohydrate kinase PfkB family. The protein in the C-terminal section; belongs to the cytidylyltransferase family. As to quaternary structure, homodimer.

It catalyses the reaction D-glycero-beta-D-manno-heptose 7-phosphate + ATP = D-glycero-beta-D-manno-heptose 1,7-bisphosphate + ADP + H(+). The catalysed reaction is D-glycero-beta-D-manno-heptose 1-phosphate + ATP + H(+) = ADP-D-glycero-beta-D-manno-heptose + diphosphate. It functions in the pathway nucleotide-sugar biosynthesis; ADP-L-glycero-beta-D-manno-heptose biosynthesis; ADP-L-glycero-beta-D-manno-heptose from D-glycero-beta-D-manno-heptose 7-phosphate: step 1/4. Its pathway is nucleotide-sugar biosynthesis; ADP-L-glycero-beta-D-manno-heptose biosynthesis; ADP-L-glycero-beta-D-manno-heptose from D-glycero-beta-D-manno-heptose 7-phosphate: step 3/4. Its function is as follows. Catalyzes the phosphorylation of D-glycero-D-manno-heptose 7-phosphate at the C-1 position to selectively form D-glycero-beta-D-manno-heptose-1,7-bisphosphate. Functionally, catalyzes the ADP transfer from ATP to D-glycero-beta-D-manno-heptose 1-phosphate, yielding ADP-D-glycero-beta-D-manno-heptose. The protein is Bifunctional protein HldE of Campylobacter jejuni subsp. jejuni serotype O:6 (strain 81116 / NCTC 11828).